The following is a 243-amino-acid chain: CR(VI) reductase (243 aa).

It belongs to the flavin oxidoreductase frp family. Requires FMN as cofactor.

The protein is CR(VI) reductase (chrR) of Pseudomonas sp. (strain G-1).